Consider the following 72-residue polypeptide: MAKEDNIEMQGTVLETLPNTMFRVELENGHVVTAHISGKMRKNYIRILTGDKVTVELTPYDLSKGRIVFRSR.

The 72-residue stretch at 1–72 folds into the S1-like domain; that stretch reads MAKEDNIEMQ…SKGRIVFRSR (72 aa).

It belongs to the IF-1 family. Component of the 30S ribosomal translation pre-initiation complex which assembles on the 30S ribosome in the order IF-2 and IF-3, IF-1 and N-formylmethionyl-tRNA(fMet); mRNA recruitment can occur at any time during PIC assembly.

It is found in the cytoplasm. One of the essential components for the initiation of protein synthesis. Stabilizes the binding of IF-2 and IF-3 on the 30S subunit to which N-formylmethionyl-tRNA(fMet) subsequently binds. Helps modulate mRNA selection, yielding the 30S pre-initiation complex (PIC). Upon addition of the 50S ribosomal subunit IF-1, IF-2 and IF-3 are released leaving the mature 70S translation initiation complex. This Klebsiella pneumoniae subsp. pneumoniae (strain ATCC 700721 / MGH 78578) protein is Translation initiation factor IF-1.